The chain runs to 1305 residues: Contactin-associated protein like 5-1 (1305 aa).

The signal sequence occupies residues 1–24; it reads MDSLQRLNGLLTLVLSALWHLGLT. In terms of domain architecture, F5/8 type C spans 25–174; it reads ASNYNCDDPL…IGMRVEAYGC (150 aa). 2 consecutive Laminin G-like domains span residues 180 to 360 and 367 to 544; these read VADF…TFSC and PITF…IDLC. Asparagine 282 is a glycosylation site (N-linked (GlcNAc...) asparagine). An intrachain disulfide couples cysteine 329 to cysteine 360. Asparagine 496 is a glycosylation site (N-linked (GlcNAc...) asparagine). 3 disulfides stabilise this stretch: cysteine 512–cysteine 544, cysteine 550–cysteine 561, and cysteine 555–cysteine 570. The region spanning 546 to 583 is the EGF-like 1 domain; that stretch reads IKDRCLPNYCEHGGHCAQTWTTFYCNCSDTGYTGATCH. N-linked (GlcNAc...) asparagine glycosylation is present at asparagine 571. An intrachain disulfide couples cysteine 572 to cysteine 582. The Fibrinogen C-terminal domain occupies 584–790; sequence DSIYEQSCEV…LRCNGDRHFW (207 aa). N-linked (GlcNAc...) asparagine glycosylation is present at asparagine 622. A Laminin G-like 3 domain is found at 791-956; the sequence is NAVSFSTEAS…KLMSGVTPGC (166 aa). Disulfide bonds link cysteine 929–cysteine 956, cysteine 960–cysteine 973, cysteine 967–cysteine 982, and cysteine 984–cysteine 994. Positions 957-995 constitute an EGF-like 2 domain; sequence PGHCSSYSSNCHNGGKCVEKQSGYSCDCTNSPNEGPFCQ. The region spanning 1014 to 1198 is the Laminin G-like 4 domain; sequence EPYLVIKNTS…VHGTLTESGC (185 aa). Asparagine 1057 carries N-linked (GlcNAc...) asparagine glycosylation. A disulfide bridge links cysteine 1163 with cysteine 1198. A helical membrane pass occupies residues 1238–1258; that stretch reads VIGGIIAVVTFVTFCVIGIMI.

It belongs to the neurexin family.

The protein resides in the membrane. May play a role in the correct development and proper functioning of the peripheral and central nervous system and be involved in cell adhesion and intercellular communication. This is Contactin-associated protein like 5-1 (Cntnap5a) from Rattus norvegicus (Rat).